We begin with the raw amino-acid sequence, 200 residues long: Probable nicotinate-nucleotide adenylyltransferase (200 aa).

It belongs to the NadD family.

The catalysed reaction is nicotinate beta-D-ribonucleotide + ATP + H(+) = deamido-NAD(+) + diphosphate. The protein operates within cofactor biosynthesis; NAD(+) biosynthesis; deamido-NAD(+) from nicotinate D-ribonucleotide: step 1/1. In terms of biological role, catalyzes the reversible adenylation of nicotinate mononucleotide (NaMN) to nicotinic acid adenine dinucleotide (NaAD). This is Probable nicotinate-nucleotide adenylyltransferase from Clostridium acetobutylicum (strain ATCC 824 / DSM 792 / JCM 1419 / IAM 19013 / LMG 5710 / NBRC 13948 / NRRL B-527 / VKM B-1787 / 2291 / W).